The following is a 173-amino-acid chain: Glutamyl-tRNA(Gln) amidotransferase subunit C, mitochondrial (173 aa).

It belongs to the GatC family. Subunit of the heterotrimeric GatCAB amidotransferase (AdT) complex, composed of A, B and C subunits.

The protein resides in the mitochondrion. It carries out the reaction L-glutamyl-tRNA(Gln) + L-glutamine + ATP + H2O = L-glutaminyl-tRNA(Gln) + L-glutamate + ADP + phosphate + H(+). Functionally, allows the formation of correctly charged Gln-tRNA(Gln) through the transamidation of misacylated Glu-tRNA(Gln) in the mitochondria. The reaction takes place in the presence of glutamine and ATP through an activated gamma-phospho-Glu-tRNA(Gln). This Drosophila persimilis (Fruit fly) protein is Glutamyl-tRNA(Gln) amidotransferase subunit C, mitochondrial.